The primary structure comprises 158 residues: S-ribosylhomocysteine lyase (158 aa).

Fe cation is bound by residues His-54, His-58, and Cys-124.

This sequence belongs to the LuxS family. As to quaternary structure, homodimer. It depends on Fe cation as a cofactor.

The enzyme catalyses S-(5-deoxy-D-ribos-5-yl)-L-homocysteine = (S)-4,5-dihydroxypentane-2,3-dione + L-homocysteine. Its function is as follows. Involved in the synthesis of autoinducer 2 (AI-2) which is secreted by bacteria and is used to communicate both the cell density and the metabolic potential of the environment. The regulation of gene expression in response to changes in cell density is called quorum sensing. Catalyzes the transformation of S-ribosylhomocysteine (RHC) to homocysteine (HC) and 4,5-dihydroxy-2,3-pentadione (DPD). This chain is S-ribosylhomocysteine lyase, found in Lactobacillus johnsonii (strain CNCM I-12250 / La1 / NCC 533).